A 91-amino-acid polypeptide reads, in one-letter code: Uteroglobin (91 aa).

Residues 1-21 (MKLAITLALVTLALLCSPASA) form the signal peptide.

It belongs to the secretoglobin family. Antiparallel homodimer; disulfide-linked. Interaction with LMBR1L is controversial. As to expression, synthesized in the uterus and lung.

The protein localises to the secreted. Functionally, uteroglobin binds progesterone specifically and with high affinity. It may regulate progesterone concentrations reaching the blastocyst. It is also a potent inhibitor of phospholipase A2. In Oryctolagus cuniculus (Rabbit), this protein is Uteroglobin (SCGB1A1).